The sequence spans 765 residues: Protein transport protein Sec23A (765 aa).

Zn(2+)-binding residues include Cys-61, Cys-66, Cys-85, and Cys-88. The stretch at 632–718 is one Gelsolin-like repeat; the sequence is PEPVLLDSSS…EHGGSQARFL (87 aa).

This sequence belongs to the SEC23/SEC24 family. SEC23 subfamily. In terms of assembly, COPII is composed of at least five proteins: the Sec23/24 complex, the Sec13/31 complex and Sar1.

Its subcellular location is the cytoplasmic vesicle. The protein resides in the COPII-coated vesicle membrane. It is found in the endoplasmic reticulum membrane. The protein localises to the cytoplasm. It localises to the cytosol. Functionally, component of the coat protein complex II (COPII) which promotes the formation of transport vesicles from the endoplasmic reticulum (ER). The coat has two main functions, the physical deformation of the endoplasmic reticulum membrane into vesicles and the selection of cargo molecules for their transport to the Golgi complex. This Xenopus tropicalis (Western clawed frog) protein is Protein transport protein Sec23A.